The sequence spans 336 residues: Geranylgeranyl pyrophosphate synthase 6, mitochondrial (336 aa).

A mitochondrion-targeting transit peptide spans 1 to 22; sequence MRPRYSLILSAMRLIRPSNRRL. Positions 80, 83, and 112 each coordinate isopentenyl diphosphate. The Mg(2+) site is built by D119 and D125. R130 contacts dimethylallyl diphosphate. R131 provides a ligand contact to isopentenyl diphosphate. Dimethylallyl diphosphate contacts are provided by K221, T222, Q259, K276, and K286.

The protein belongs to the FPP/GGPP synthase family. Monomer. Mg(2+) serves as cofactor.

The protein localises to the mitochondrion. It carries out the reaction isopentenyl diphosphate + dimethylallyl diphosphate = (2E)-geranyl diphosphate + diphosphate. It catalyses the reaction isopentenyl diphosphate + (2E)-geranyl diphosphate = (2E,6E)-farnesyl diphosphate + diphosphate. The enzyme catalyses isopentenyl diphosphate + (2E,6E)-farnesyl diphosphate = (2E,6E,10E)-geranylgeranyl diphosphate + diphosphate. It functions in the pathway isoprenoid biosynthesis; farnesyl diphosphate biosynthesis; farnesyl diphosphate from geranyl diphosphate and isopentenyl diphosphate: step 1/1. The protein operates within isoprenoid biosynthesis; geranyl diphosphate biosynthesis; geranyl diphosphate from dimethylallyl diphosphate and isopentenyl diphosphate: step 1/1. It participates in isoprenoid biosynthesis; geranylgeranyl diphosphate biosynthesis; geranylgeranyl diphosphate from farnesyl diphosphate and isopentenyl diphosphate: step 1/1. Functionally, catalyzes the trans-addition of the three molecules of IPP onto DMAPP to form geranylgeranyl pyrophosphate. This Arabidopsis thaliana (Mouse-ear cress) protein is Geranylgeranyl pyrophosphate synthase 6, mitochondrial.